Here is a 563-residue protein sequence, read N- to C-terminus: Cystathionine gamma-synthase 1, chloroplastic (563 aa).

A chloroplast-targeting transit peptide spans 1 to 68 (MAVSSFQCPT…SRILRFPPNF (68 aa)). Pyridoxal 5'-phosphate is bound by residues Tyr226, Arg228, Gly256, Met257, Tyr281, Ser376, and Thr378. Lys379 carries the post-translational modification N6-(pyridoxal phosphate)lysine.

Belongs to the trans-sulfuration enzymes family. Pyridoxal 5'-phosphate serves as cofactor.

It is found in the plastid. The protein resides in the chloroplast. The catalysed reaction is O-phospho-L-homoserine + L-cysteine = L,L-cystathionine + phosphate. It carries out the reaction O-succinyl-L-homoserine + L-cysteine = L,L-cystathionine + succinate + H(+). It participates in amino-acid biosynthesis; L-methionine biosynthesis via de novo pathway; L-cystathionine from O-succinyl-L-homoserine: step 1/1. With respect to regulation, inhibited by propargylglycine. Its function is as follows. Catalyzes the first committed step of methionine (Met) biosynthesis. Catalyzes the formation of L-cystathionine from homoserine esters and L-cysteine, via a gamma-replacement reaction. Substrate preference for cystathionine synthesis is O-phospho-L-homoserine (OPH) &gt; O(4)-succinyl-L-homoserine (OSH) &gt;&gt; O-acetyl-L-homoserine (OAH). Is able, at extremely low rate, to catalyze a gamma-elimination of OPH in the absence of cysteine to produce inorganic phosphate (Pi), 2-oxobutanoate and ammonia. This is Cystathionine gamma-synthase 1, chloroplastic from Arabidopsis thaliana (Mouse-ear cress).